A 183-amino-acid polypeptide reads, in one-letter code: RNA pyrophosphohydrolase (183 aa).

The region spanning 6–149 is the Nudix hydrolase domain; that stretch reads GYRPNVGIIL…KREVYRLALE (144 aa). Positions 38–59 match the Nudix box motif; the sequence is GGINAGETPEQAMFRELEEEVG.

Belongs to the Nudix hydrolase family. RppH subfamily. The cofactor is a divalent metal cation.

In terms of biological role, accelerates the degradation of transcripts by removing pyrophosphate from the 5'-end of triphosphorylated RNA, leading to a more labile monophosphorylated state that can stimulate subsequent ribonuclease cleavage. The sequence is that of RNA pyrophosphohydrolase from Thiobacillus denitrificans (strain ATCC 25259 / T1).